The primary structure comprises 272 residues: Imidazole glycerol phosphate synthase subunit HisF (272 aa).

Catalysis depends on residues Asp-11 and Asp-130.

The protein belongs to the HisA/HisF family. As to quaternary structure, heterodimer of HisH and HisF.

It is found in the cytoplasm. The catalysed reaction is 5-[(5-phospho-1-deoxy-D-ribulos-1-ylimino)methylamino]-1-(5-phospho-beta-D-ribosyl)imidazole-4-carboxamide + L-glutamine = D-erythro-1-(imidazol-4-yl)glycerol 3-phosphate + 5-amino-1-(5-phospho-beta-D-ribosyl)imidazole-4-carboxamide + L-glutamate + H(+). The protein operates within amino-acid biosynthesis; L-histidine biosynthesis; L-histidine from 5-phospho-alpha-D-ribose 1-diphosphate: step 5/9. In terms of biological role, IGPS catalyzes the conversion of PRFAR and glutamine to IGP, AICAR and glutamate. The HisF subunit catalyzes the cyclization activity that produces IGP and AICAR from PRFAR using the ammonia provided by the HisH subunit. This chain is Imidazole glycerol phosphate synthase subunit HisF, found in Methanococcus vannielii (strain ATCC 35089 / DSM 1224 / JCM 13029 / OCM 148 / SB).